Consider the following 902-residue polypeptide: Nuclear factor of activated T-cells, cytoplasmic 4 (902 aa).

Disordered stretches follow at residues valine 16–serine 180 and arginine 208–arginine 369. Residues glutamate 50–serine 81 are compositionally biased toward pro residues. Positions glycine 96–arginine 109 are enriched in gly residues. The interval proline 114 to threonine 119 is calcineurin-binding. Gly residues predominate over residues glycine 151–alanine 165. Residues phenylalanine 166 to serine 180 show a composition bias toward low complexity. Phosphoserine; by MAPK7 and MAPK14 occurs at positions 168 and 170. Serine 213 and serine 217 each carry phosphoserine; by MAPK8 and MAPK9. An SP 1 repeat occupies serine 213–aspartate 229. The 2 approximate SP repeats stretch occupies residues serine 213–glutamate 293. Pro residues-rich tracts occupy residues leucine 215 to proline 227 and glycine 254 to alanine 263. Positions lysine 268–arginine 270 match the Nuclear localization signal motif. Residues serine 272–glycine 288 show a composition bias toward low complexity. The stretch at proline 277–glutamate 293 is one SP 2; approximate repeat. Residues serine 289 and serine 344 each carry the phosphoserine; by RPS6KA3 modification. Residues serine 401–alanine 582 enclose the RHD domain. A DNA-binding region spans residues arginine 430 to glycine 437. Residues proline 586 to phenylalanine 683 enclose the IPT/TIG domain. The Nuclear localization signal signature appears at arginine 672–lysine 674. Lysine 689 is covalently cross-linked (Glycyl lysine isopeptide (Lys-Gly) (interchain with G-Cter in SUMO2)). A disordered region spans residues proline 791–serine 870. The segment covering phenylalanine 805 to glycine 824 has biased composition (pro residues).

In terms of assembly, member of the multicomponent NFATC transcription complex that consists of at least two components, a pre-existing cytoplasmic component NFATC2 and an inducible nuclear component NFATC1. Other NFAT proteins, such as NFATC3, or members of the activating protein-1 (AP-1) family and MAF can also bind the complex. NFAT proteins can bind DNA as monomers or dimers. Component of a promoter-binding complex composed of STAT3, NFATC3 and NFATC4; complex formation is enhanced by calcineurin. Interacts with CREBBP; this interaction potentiates transcription activation. Interacts with MAPK8/JNK1 and MAPK9/JNK2. Interacts with GATA4 (via the second Zn finger). Interacts (via N-terminus) with IRAK1 (via C-terminus). Interacts with RPS6KA3. Interacts with HOMER1, HOMER2 and HOMER3; this interaction competes with calcineurin/PPP3CA-binding and hence prevents NFATC4 dephosphorylation and activation. Interacts with ESR1 and ESR2; this interaction decreases NFATC4 transcriptional activity. Interacts with MTOR and MAPK7/ERK5. Interacts with TRIM17; this interaction prevents NFATC3 nuclear localization. Interacts with TCF25 (via C-terminus); the interaction leads to suppression of NFATC4 transcription factor activity and is reduced following stimulation with angiotensin-2. Phosphorylated by NFATC-kinases; dephosphorylated by calcineurin/PPP3CA. Phosphorylated on Ser-168 and Ser-170 by MTOR, IRAK1, MAPK7/ERK5 and MAPK14/p38, on Ser-213 and Ser-217 by MAPK8/JNK1 and MAPK9/JNK2, and on Ser-289 and Ser-344 by RPS6KA3. Phosphorylated by GSK3B. Phosphorylation by GSK3B markedly increases NFATC4 ubiquitination. Phosphorylation at Ser-168 and Ser-170 is stimulated by UV irradiation. Phosphorylation determines subcellular location: the hyperphosphorylated protein is cytosolic, while the dephosphorylated form is targeted to the nucleus. Post-translationally, ubiquitinated, leading to degradation by the proteasome. Ubiquitination may be stimulated by GSK3B-dependent phosphorylation. Polyubiquitin linkage mainly occurs through 'Lys-48'. Widely expressed, with high levels in placenta, lung, kidney, testis and ovary. Weakly expressed in spleen and thymus. In the hippocampus, expressed in the granular layer of the dentate gyrus, in the pyramidal neurons of CA3 region, and in the hippocampal fissure. Expressed in the heart (at protein level).

The protein localises to the cytoplasm. It is found in the nucleus. Transcriptional activity may be repressed by ESR1 and ESR2. Functionally, ca(2+)-regulated transcription factor that is involved in several processes, including the development and function of the immune, cardiovascular, musculoskeletal, and nervous systems. Involved in T-cell activation, stimulating the transcription of cytokine genes, including that of IL2 and IL4. Along with NFATC3, involved in embryonic heart development. Following JAK/STAT signaling activation and as part of a complex with NFATC3 and STAT3, binds to the alpha-beta E4 promoter region of CRYAB and activates transcription in cardiomyocytes. Involved in mitochondrial energy metabolism required for cardiac morphogenesis and function. Transactivates many genes involved in the cardiovascular system, including AGTR2, NPPB/BNP (in synergy with GATA4), NPPA/ANP/ANF and MYH7/beta-MHC. Involved in the regulation of adult hippocampal neurogenesis. Involved in BDNF-driven pro-survival signaling in hippocampal adult-born neurons. Involved in the formation of long-term spatial memory and long-term potentiation. In cochlear nucleus neurons, may play a role in deafferentation-induced apoptosis during the developmental critical period, when auditory neurons depend on afferent input for survival. Binds to and activates the BACE1/Beta-secretase 1 promoter, hence may regulate the proteolytic processing of the amyloid precursor protein (APP). Plays a role in adipocyte differentiation. May be involved in myoblast differentiation into myotubes. Binds the consensus DNA sequence 5'-GGAAAAT-3'. In the presence of CREBBP, activates TNF transcription. Binds to PPARG gene promoter and regulates its activity. Binds to PPARG and REG3G gene promoters. This Homo sapiens (Human) protein is Nuclear factor of activated T-cells, cytoplasmic 4 (NFATC4).